A 154-amino-acid polypeptide reads, in one-letter code: Deoxyuridine 5'-triphosphate nucleotidohydrolase (154 aa).

Residues 72–74 (RSG), Asn85, 89–91 (LID), and Met99 each bind substrate.

It belongs to the dUTPase family. Requires Mg(2+) as cofactor.

It catalyses the reaction dUTP + H2O = dUMP + diphosphate + H(+). It functions in the pathway pyrimidine metabolism; dUMP biosynthesis; dUMP from dCTP (dUTP route): step 2/2. Functionally, this enzyme is involved in nucleotide metabolism: it produces dUMP, the immediate precursor of thymidine nucleotides and it decreases the intracellular concentration of dUTP so that uracil cannot be incorporated into DNA. This chain is Deoxyuridine 5'-triphosphate nucleotidohydrolase, found in Psychrobacter sp. (strain PRwf-1).